The sequence spans 61 residues: Peroxidase 1 (61 aa).

A disordered region spans residues 1 to 32; that stretch reads DNTAKEKDSPANLSLRTCAAGDNAEQPLDPSR. Residue asparagine 12 is glycosylated (N-linked (GlcNAc...) asparagine). Residues aspartate 29, serine 31, and aspartate 36 each contribute to the Ca(2+) site.

It belongs to the peroxidase family. Classical plant (class III) peroxidase subfamily. Ca(2+) is required as a cofactor. It depends on heme b as a cofactor.

Its subcellular location is the secreted. The enzyme catalyses 2 a phenolic donor + H2O2 = 2 a phenolic radical donor + 2 H2O. Removal of H(2)O(2), oxidation of toxic reductants, biosynthesis and degradation of lignin, suberization, auxin catabolism, response to environmental stresses such as wounding, pathogen attack and oxidative stress. These functions might be dependent on each isozyme/isoform in each plant tissue. The sequence is that of Peroxidase 1 from Vitis rotundifolia (Muscadine grape).